Consider the following 322-residue polypeptide: Fructose-1,6-bisphosphatase class 1 1 (322 aa).

Residues Glu-84, Asp-103, Leu-105, and Asp-106 each coordinate Mg(2+). Substrate contacts are provided by residues 106-109, Asn-198, and Lys-264; that span reads DGSS. Glu-270 is a binding site for Mg(2+).

Belongs to the FBPase class 1 family. In terms of assembly, homotetramer. Mg(2+) serves as cofactor.

It is found in the cytoplasm. It carries out the reaction beta-D-fructose 1,6-bisphosphate + H2O = beta-D-fructose 6-phosphate + phosphate. It functions in the pathway carbohydrate biosynthesis; gluconeogenesis. The protein is Fructose-1,6-bisphosphatase class 1 1 of Pseudoalteromonas translucida (strain TAC 125).